A 61-amino-acid chain; its full sequence is Short neurotoxin 1 (61 aa).

The segment covering 1–16 (MECHNQQSSQPPTTKT) has biased composition (polar residues). Positions 1–20 (MECHNQQSSQPPTTKTCPGE) are disordered. Disulfide bonds link Cys3-Cys23, Cys17-Cys40, Cys42-Cys53, and Cys54-Cys59.

The protein belongs to the three-finger toxin family. Short-chain subfamily. Type I alpha-neurotoxin sub-subfamily. In terms of tissue distribution, expressed by the venom gland.

It is found in the secreted. In terms of biological role, binds to muscle nicotinic acetylcholine receptor (nAChR) and inhibit acetylcholine from binding to the receptor, thereby impairing neuromuscular transmission. The chain is Short neurotoxin 1 from Naja melanoleuca (Forest cobra).